The chain runs to 638 residues: Cytoplasmic dynein 1 intermediate chain 2 (638 aa).

Composition is skewed to basic and acidic residues over residues Met-1 to Arg-13 and Gln-20 to Ala-43. Disordered stretches follow at residues Met-1–Pro-135 and Thr-155–Gln-214. Ser-2 is modified (N-acetylserine). Residue Ser-51 is modified to Diphosphoserine. Ser-51, Ser-73, Trp-81, Pro-84, and Ser-90 each carry phosphoserine. The segment covering Pro-88 to Ser-97 has biased composition (low complexity). Thr-95 carries the post-translational modification Phosphothreonine. Phosphoserine occurs at positions 97, 101, and 104. A compositionally biased stretch (basic and acidic residues) spans Glu-190–Gln-214. WD repeat units follow at residues Ser-277 to Glu-326, His-330 to Val-370, Ala-379 to Asp-420, Ser-429 to Ser-469, Gly-474 to Ser-519, Asp-522 to Thr-562, and Glu-568 to Arg-607.

This sequence belongs to the dynein intermediate chain family. As to quaternary structure, homodimer. The cytoplasmic dynein 1 complex consists of two catalytic heavy chains (HCs) and a number of non-catalytic subunits presented by intermediate chains (ICs), light intermediate chains (LICs) and light chains (LCs); the composition seems to vary in respect to the IC, LIC and LC composition. The heavy chain homodimer serves as a scaffold for the probable homodimeric assembly of the respective non-catalytic subunits. The ICs and LICs bind directly to the HC dimer and the LCs assemble on the IC dimer. Interacts with DYNLT3. Interacts with DYNLT1. Interacts (dephosphorylated at Ser-90) with DCTN1. Interacts with BICD2. Interacts with SPEF2. Interacts with CFAP61. In terms of assembly, (Microbial infection) Interacts with human adenovirus 5 hexon protein; this interaction probably allows virus intracellular transport. The phosphorylation status of Ser-90 appears to be involved in dynactin-dependent target binding. Post-translationally, pyrophosphorylation by 5-diphosphoinositol pentakisphosphate (5-IP7) promotes interaction with DCTN1. Serine pyrophosphorylation is achieved by Mg(2+)-dependent, but enzyme independent transfer of a beta-phosphate from a inositol pyrophosphate to a pre-phosphorylated serine residue.

Its subcellular location is the cytoplasm. The protein localises to the cytoskeleton. Its function is as follows. Acts as one of several non-catalytic accessory components of the cytoplasmic dynein 1 complex that are thought to be involved in linking dynein to cargos and to adapter proteins that regulate dynein function. Cytoplasmic dynein 1 acts as a motor for the intracellular retrograde motility of vesicles and organelles along microtubules. The intermediate chains mediate the binding of dynein to dynactin via its 150 kDa component (p150-glued) DCTN1. Involved in membrane-transport, such as Golgi apparatus, late endosomes and lysosomes. This is Cytoplasmic dynein 1 intermediate chain 2 from Homo sapiens (Human).